We begin with the raw amino-acid sequence, 398 residues long: T-box transcription factor TBX1 (398 aa).

The interval 23-72 (AAGGFPGAASPGADPYGPREPPPPPPRYDPCAAAAPGAPGPPPPPHAYPF) is disordered. Residues 29-38 (GAASPGADPY) show a composition bias toward low complexity. Pro residues-rich tracts occupy residues 40–50 (PREPPPPPPRY) and 60–69 (APGPPPPPHA). A DNA-binding region (T-box) is located at residues 119–297 (LWDEFNQLGT…SNPFAKGFRD (179 aa)).

In terms of assembly, binds DNA as a dimer. Interacts with DSCR6. Interacts with NKX2-5.

The protein localises to the nucleus. Functionally, transcription factor that plays a key role in cardiovascular development by promoting pharyngeal arch segmentation during embryonic development. Also involved in craniofacial muscle development. Together with NKX2-5, acts as a regulator of asymmetric cardiac morphogenesis by promoting expression of PITX2. Acts upstream of TBX1 for the formation of the thymus and parathyroid glands from the third pharyngeal pouch. Required for hair follicle stem cell self-renewal. Binds to the palindromic T site 5'-TTCACACCTAGGTGTGAA-3' DNA sequence. The polypeptide is T-box transcription factor TBX1 (Homo sapiens (Human)).